A 338-amino-acid polypeptide reads, in one-letter code: HLA class I histocompatibility antigen, alpha chain G (338 aa).

Positions 1-24 are cleaved as a signal peptide; that stretch reads MVVMAPRTLFLLLSGALTLTETWA. Positions 3–11 are VL9 epitope; it reads VMAPRTLFL. Residues 25–114 form an alpha-1 region; the sequence is GSHSMRYFSA…LRGYYNQSEA (90 aa). At 25–308 the chain is on the extracellular side; it reads GSHSMRYFSA…KQSSLPTIPI (284 aa). 4 residues coordinate a peptide antigen: Y31, H94, N101, and Y108. Residue N110 is glycosylated (N-linked (GlcNAc...) asparagine). Residues 115 to 206 are alpha-2; sequence SSHTLQWMIG…ENGKEMLQRA (92 aa). Residues C125 and C188 are joined by a disulfide bond. The a peptide antigen site is built by S167, K170, Q179, R180, Y183, and Y195. Residues 207-298 are alpha-3; sequence DPPKTHVTHH…GLPEPLMLRW (92 aa). An Ig-like C1-type domain is found at 209-299; that stretch reads PKTHVTHHPV…LPEPLMLRWK (91 aa). The cysteines at positions 227 and 283 are disulfide-linked. Residues 299–308 form a connecting peptide region; sequence KQSSLPTIPI. The helical transmembrane segment at 309 to 332 threads the bilayer; the sequence is MGIVAGLVVLAAVVTGAAVAAVLW. Residues 333–338 are Cytoplasmic-facing; that stretch reads RKKSSD. The short motif at 334–336 is the ER-retrieval signal element; sequence KKS.

The protein belongs to the MHC class I family. Forms a heterotrimer with B2M and a self-peptide (peptide-bound HLA-G-B2M). HLA-G-B2M complex interacts with components of the antigen processing machinery TAPBP and TAP1-TAP2 complex; this interaction is required for loading of high affinity peptides and heterotrimer translocation to the cell surface. Interacts with CALCR; this interaction is required for appropriate folding. Interacts with COPB1; this interaction mediates the endoplasmic reticulum (ER) retrieval of HLA-G-B2M complexes that bind low affinity peptides. On the cell surface, peptide-bound HLA-G-B2M molecules (referred to as monomers) can form disulfide-linked homomultimers, homodimers and homotrimers. Interacts with KIR2DL4; this interaction is direct. Interacts with LILRB1 and LILRB2 receptors; this interaction is direct. Interacts with CD160; this interactions is direct. Interacts with CD8A homodimer; this interaction is direct and might down-regulate T cell receptor signaling. Isoform 2: Forms a non-disulfide-linked homodimer and interacts with LILRB2. N-glycosylated. In terms of processing, produced by proteolytic cleavage at the cell surface (shedding) by matrix metalloproteinase MMP2. Expressed in adult eye. Expressed in immune cell subsets including monocytes, myeloid and plasmacytoid dendritic cells and regulatory T cells (Tr1)(at protein level). Secreted by follicular dendritic cell and follicular helper T cells. As to expression, detected in physiological fluids including amniotic fluid and serum. In terms of tissue distribution, expressed in placenta, amniotic membrane, skin, cord blood and peripheral blood mononuclear cells.

It localises to the cell membrane. The protein resides in the endoplasmic reticulum membrane. It is found in the early endosome membrane. The protein localises to the secreted. Its subcellular location is the early endosome. It localises to the cell projection. The protein resides in the filopodium membrane. In terms of biological role, non-classical major histocompatibility class Ib molecule involved in immune regulatory processes at the maternal-fetal interface. In complex with B2M/beta-2 microglobulin binds a limited repertoire of nonamer self-peptides derived from intracellular proteins including histones and ribosomal proteins. Peptide-bound HLA-G-B2M complex acts as a ligand for inhibitory/activating KIR2DL4, LILRB1 and LILRB2 receptors on uterine immune cells to promote fetal development while maintaining maternal-fetal tolerance. Upon interaction with KIR2DL4 and LILRB1 receptors on decidual NK cells, it triggers NK cell senescence-associated secretory phenotype as a molecular switch to promote vascular remodeling and fetal growth in early pregnancy. Through interaction with KIR2DL4 receptor on decidual macrophages induces pro-inflammatory cytokine production mainly associated with tissue remodeling. Through interaction with LILRB2 receptor triggers differentiation of type 1 regulatory T cells and myeloid-derived suppressor cells, both of which actively maintain maternal-fetal tolerance. May play a role in balancing tolerance and antiviral-immunity at maternal-fetal interface by keeping in check the effector functions of NK, CD8+ T cells and B cells. Reprograms B cells toward an immune suppressive phenotype via LILRB1. May induce immune activation/suppression via intercellular membrane transfer (trogocytosis), likely enabling interaction with KIR2DL4, which resides mostly in endosomes. Through interaction with the inhibitory receptor CD160 on endothelial cells may control angiogenesis in immune privileged sites. Its function is as follows. Likely does not bind B2M and presents peptides. Negatively regulates NK cell- and CD8+ T cell-mediated cytotoxicity. Functionally, non-classical major histocompatibility class Ib molecule involved in immune regulatory processes at the maternal-fetal interface. In complex with B2M/beta-2 microglobulin binds a limited repertoire of nonamer self-peptides derived from intracellular proteins including histones and ribosomal proteins. Peptide-bound HLA-G-B2M complex acts as a ligand for inhibitory/activating KIR2DL4, LILRB1 and LILRB2 receptors on uterine immune cells to promote fetal development while maintaining maternal-fetal tolerance. Upon interaction with KIR2DL4 and LILRB1 receptors on decidual NK cells, it triggers NK cell senescence-associated secretory phenotype as a molecular switch to promote vascular remodeling and fetal growth in early pregnancy. Through interaction with KIR2DL4 receptor on decidual macrophages induces pro-inflammatory cytokine production mainly associated with tissue remodeling. Through interaction with LILRB2 receptor triggers differentiation of type 1 regulatory T cells and myeloid-derived suppressor cells, both of which actively maintain maternal-fetal tolerance. Reprograms B cells toward an immune suppressive phenotype via LILRB1. Likely does not bind B2M and presents peptides. The polypeptide is HLA class I histocompatibility antigen, alpha chain G (Homo sapiens (Human)).